Consider the following 242-residue polypeptide: Ribosomal RNA small subunit methyltransferase G (242 aa).

Residues Gly79, Phe84, 130 to 131, and Arg150 each bind S-adenosyl-L-methionine; that span reads AE.

The protein belongs to the methyltransferase superfamily. RNA methyltransferase RsmG family.

It is found in the cytoplasm. Specifically methylates the N7 position of a guanine in 16S rRNA. This is Ribosomal RNA small subunit methyltransferase G from Levilactobacillus brevis (strain ATCC 367 / BCRC 12310 / CIP 105137 / JCM 1170 / LMG 11437 / NCIMB 947 / NCTC 947) (Lactobacillus brevis).